Consider the following 132-residue polypeptide: Small ribosomal subunit protein uS8 (132 aa).

This sequence belongs to the universal ribosomal protein uS8 family. In terms of assembly, part of the 30S ribosomal subunit. Contacts proteins S5 and S12.

One of the primary rRNA binding proteins, it binds directly to 16S rRNA central domain where it helps coordinate assembly of the platform of the 30S subunit. This Caulobacter sp. (strain K31) protein is Small ribosomal subunit protein uS8.